A 388-amino-acid polypeptide reads, in one-letter code: Alanine racemase (388 aa).

Lys-39 functions as the Proton acceptor; specific for D-alanine in the catalytic mechanism. Lys-39 carries the N6-(pyridoxal phosphate)lysine modification. Lys-129 is modified (N6-carboxylysine). Position 136 (Arg-136) interacts with substrate. Tyr-265 functions as the Proton acceptor; specific for L-alanine in the catalytic mechanism. Met-312 contributes to the substrate binding site.

The protein belongs to the alanine racemase family. As to quaternary structure, homodimer. The cofactor is pyridoxal 5'-phosphate.

The catalysed reaction is L-alanine = D-alanine. It functions in the pathway amino-acid biosynthesis; D-alanine biosynthesis; D-alanine from L-alanine: step 1/1. With respect to regulation, inhibited by acetate and propionate. Irreversibly inhibited by cycloserine. In terms of biological role, catalyzes the interconversion of L-alanine and D-alanine. Also weakly active on serine. This chain is Alanine racemase (alr), found in Geobacillus stearothermophilus (Bacillus stearothermophilus).